A 168-amino-acid polypeptide reads, in one-letter code: uncharacterized protein (168 aa).

CBS domains lie at 20–77 (IMKK…NEDL) and 117–168 (MTRK…EALI).

This is an uncharacterized protein from Methanocaldococcus jannaschii (strain ATCC 43067 / DSM 2661 / JAL-1 / JCM 10045 / NBRC 100440) (Methanococcus jannaschii).